The sequence spans 469 residues: MDRRIYGIETEFGLTHSAPEGPALSADDAARRLFAPVLAWGRASNVFLPNGGRLYLDVGSHPEYATAEAATLHDVVAQDAAGERIVDELRSRLQESLDAEGVRGTVHLFKNNVDSAGNAFGSHENYMIARSTEFSRLLGHLLPFLVTRQILVGAGKVHPSGPPAFGAFAPGDGAASYSFSQRADHIWEGSSSATTRSRPMINTRDEPHADAQHYRRLHVITGDSNMSQTTTALKIGATDLLLRMIEAGQILPDRTLADPASALRQVSHDLTGTARLALADGSSRTALELQHEVLEAVTRFVQRHGAHHDRVPWVLELWERGLRAVAEQNASLVDRELDWAVKKKLLDAYAASHGMDLSHPRLAQLDLAYHDTSPTHGLFHMLERRGAVESFVSPQDVSRAVGQAPETRARLRGRFVAAAHAADVNHTVDWVHLKLNGPHSQRISMCKDPFATTQPDVEEMIRDLAAGAV.

Mg(2+) is bound at residue Glu9. Arg53 provides a ligand contact to ATP. Tyr55 is a binding site for Mg(2+). The active-site Proton acceptor is the Asp57. A Mg(2+)-binding site is contributed by Glu63. Thr66 and Trp430 together coordinate ATP.

Belongs to the Pup ligase/Pup deamidase family. Pup-conjugating enzyme subfamily.

The enzyme catalyses ATP + [prokaryotic ubiquitin-like protein]-L-glutamate + [protein]-L-lysine = ADP + phosphate + N(6)-([prokaryotic ubiquitin-like protein]-gamma-L-glutamyl)-[protein]-L-lysine.. It participates in protein degradation; proteasomal Pup-dependent pathway. It functions in the pathway protein modification; protein pupylation. In terms of biological role, catalyzes the covalent attachment of the prokaryotic ubiquitin-like protein modifier Pup to the proteasomal substrate proteins, thereby targeting them for proteasomal degradation. This tagging system is termed pupylation. The ligation reaction involves the side-chain carboxylate of the C-terminal glutamate of Pup and the side-chain amino group of a substrate lysine. In Kocuria rhizophila (strain ATCC 9341 / DSM 348 / NBRC 103217 / DC2201), this protein is Pup--protein ligase.